Consider the following 428-residue polypeptide: Serine--tRNA ligase (428 aa).

235–237 (TAE) contacts L-serine. 266 to 268 (RSE) contributes to the ATP binding site. Residue Glu-289 coordinates L-serine. 353–356 (EISS) lines the ATP pocket. Residue Ser-389 participates in L-serine binding.

This sequence belongs to the class-II aminoacyl-tRNA synthetase family. Type-1 seryl-tRNA synthetase subfamily. As to quaternary structure, homodimer. The tRNA molecule binds across the dimer.

It localises to the cytoplasm. The enzyme catalyses tRNA(Ser) + L-serine + ATP = L-seryl-tRNA(Ser) + AMP + diphosphate + H(+). The catalysed reaction is tRNA(Sec) + L-serine + ATP = L-seryl-tRNA(Sec) + AMP + diphosphate + H(+). Its pathway is aminoacyl-tRNA biosynthesis; selenocysteinyl-tRNA(Sec) biosynthesis; L-seryl-tRNA(Sec) from L-serine and tRNA(Sec): step 1/1. In terms of biological role, catalyzes the attachment of serine to tRNA(Ser). Is also able to aminoacylate tRNA(Sec) with serine, to form the misacylated tRNA L-seryl-tRNA(Sec), which will be further converted into selenocysteinyl-tRNA(Sec). The sequence is that of Serine--tRNA ligase from Shewanella denitrificans (strain OS217 / ATCC BAA-1090 / DSM 15013).